The primary structure comprises 188 residues: VEMACPGKVSCLGDKAITVLSENNPLTGTKGEIRMGDGFNVEEEIEKVLEQVGKTTFDVALYASGSWKKPQPLAVMVATLAVMQVRDVVWLSALAMACRLLMDTFAEKYFLQPVLQPSYELFKNAGSNMDGTVTSFDNIYYKTNSWASPLSIRGGYPMHSTSNMGSQIYQDNPVANCLDLSSLDLANR.

It belongs to the peroxidase family. Partially N-glycosylated.

The protein localises to the secreted. The enzyme catalyses 2 a phenolic donor + H2O2 = 2 a phenolic radical donor + 2 H2O. The polypeptide is Peroxidase B (Aloe vera (Aloe)).